The following is a 143-amino-acid chain: AP-2 complex subunit sigma (143 aa).

This sequence belongs to the adaptor complexes small subunit family. In terms of assembly, adaptor protein complex 2 (AP-2) is a heterotetramer composed of two large adaptins (alpha-type subunit APL3 and beta-type subunit APL1), a medium chain (mu-type subunit APM4) and a small adaptin (sigma-type subunit APS2).

The protein localises to the cell membrane. Its subcellular location is the membrane. It is found in the coated pit. Component of the adaptor complexes which link clathrin to receptors in coated vesicles. Clathrin-associated protein complexes are believed to interact with the cytoplasmic tails of membrane proteins, leading to their selection and concentration. In Neurospora crassa (strain ATCC 24698 / 74-OR23-1A / CBS 708.71 / DSM 1257 / FGSC 987), this protein is AP-2 complex subunit sigma (aps-2).